The sequence spans 30 residues: Methanobactin mb-OB3b (30 aa).

The propeptide occupies 1 to 19; that stretch reads MTVKIAQKKVLPVIGRAAA. Positions 20-21 form a cross-link, 2-(3-methylbutanoyl)-5-hydroxyoxazole-4-carbothionic acid (Leu-Cys); sequence LC. Cu(2+) is bound by residues Cys21 and Cys27. An intrachain disulfide couples Cys24 to Cys29. Positions 26–27 form a cross-link, proline 5-hydroxy-oxazole-4-carbothionic acid (Pro-Cys); that stretch reads PC.

As to quaternary structure, monomer. In the absence of copper, may exist as a dimer or an oligomer.

It localises to the secreted. It is found in the cytoplasm. It catalyses the reaction 2 superoxide + 2 H(+) = H2O2 + O2. In terms of biological role, chalkophore involved in scavenging, uptake and suppression of toxicity of copper. Each apo-methanobactin (apo-mb) complexes 1 Cu(2+) or Cu(1+) ion to form Cu(1+)-mb (Cu-mb) which is then taken up by the cell. Enhances growth rate in the presence of copper and reduces growth lag upon exposition to elevated levels of copper. Cu-mb contributes to the switchover from soluble methane monooxygenase (sMMO) to the membrane-bound particulate MMO (pMMO) by inducing transcription of pMMO subunit A. It also stimulates the enzymatic activity of pMMO. In the absence of copper, binds other metal ions, like Zn(2+), Ag(1+), Au(3+), Co(2+), Cd(2+), Fe(3+), Hg(2+), Mn(2+), Ni(2+), Pb(2+) or U(6+), but not Ba(2+), Ca(2+), La(2+), Mg(2+) or Sr(2+). Uptake is an active process, which may involve TonB-dependent transporters, and as such does not involve porins. Cu-Mb can be taken up by other methanotrophic bacteria but not by E.coli. Has Cu-dependent superoxide dismutase-like activity. Shows reductant-dependent oxidase and hydrogen peroxide reductase activities. Reduces copper-levels in liver in a rat model of Wilson disease. This Methylosinus trichosporium protein is Methanobactin mb-OB3b.